The following is a 71-amino-acid chain: Glucose-repressible gene protein (71 aa).

Residues 19–71 (TATASKEANKDVAKDSNQGVGTRLNAAGDAISDKVSENKHDAKAEAHKQGATH) are disordered. Positions 49 to 71 (ISDKVSENKHDAKAEAHKQGATH) are enriched in basic and acidic residues.

The chain is Glucose-repressible gene protein (grg-1) from Neurospora crassa (strain ATCC 24698 / 74-OR23-1A / CBS 708.71 / DSM 1257 / FGSC 987).